The chain runs to 528 residues: Glutamyl-tRNA(Gln) amidotransferase subunit B, mitochondrial (528 aa).

The protein belongs to the GatB/GatE family. GatB subfamily. Subunit of the heterotrimeric GatFAB amidotransferase (AdT) complex, composed of A, B and F subunits.

The protein resides in the mitochondrion. It catalyses the reaction L-glutamyl-tRNA(Gln) + L-glutamine + ATP + H2O = L-glutaminyl-tRNA(Gln) + L-glutamate + ADP + phosphate + H(+). Allows the formation of correctly charged Gln-tRNA(Gln) through the transamidation of misacylated Glu-tRNA(Gln) in the mitochondria. The reaction takes place in the presence of glutamine and ATP through an activated gamma-phospho-Glu-tRNA(Gln). The polypeptide is Glutamyl-tRNA(Gln) amidotransferase subunit B, mitochondrial (Clavispora lusitaniae (strain ATCC 42720) (Yeast)).